The following is a 1235-amino-acid chain: DNA polymerase catalytic subunit (1235 aa).

Disordered regions lie at residues 640–692 (QGRF…TAGR) and 1098–1134 (ATAP…ASKP). Over residues 650–661 (APKRPAAAREDE) the composition is skewed to basic and acidic residues. Residues 662 to 675 (ERPEEEGEDEDERE) show a composition bias toward acidic residues. Residues 676–691 (EGGGEREPEGARETAG) show a composition bias toward basic and acidic residues.

This sequence belongs to the DNA polymerase type-B family. Forms a complex with the ssDNA-binding protein UL29, the DNA polymerase processivity factor, and the alkaline exonuclease. Interacts with the putative helicase-primase complex subunit UL8; this interaction may coordinate leading and lagging strand DNA synthesis at the replication fork.

It is found in the host nucleus. The catalysed reaction is DNA(n) + a 2'-deoxyribonucleoside 5'-triphosphate = DNA(n+1) + diphosphate. It carries out the reaction Endonucleolytic cleavage to 5'-phosphomonoester.. Its function is as follows. Replicates viral genomic DNA. The replication complex is composed of six viral proteins: the DNA polymerase, processivity factor, primase, primase-associated factor, helicase, and ssDNA-binding protein. Additionally, the polymerase contains an intrinsic ribonuclease H (RNase H) activity that specifically degrades RNA/DNA heteroduplexes or duplex DNA substrates in the 5' to 3' direction. Therefore, it can catalyze the excision of the RNA primers that initiate the synthesis of Okazaki fragments at a replication fork during viral DNA replication. This chain is DNA polymerase catalytic subunit, found in Human herpesvirus 1 (strain Angelotti) (HHV-1).